Consider the following 238-residue polypeptide: Small ribosomal subunit protein uS3 (238 aa).

In terms of domain architecture, KH type-2 spans 39–107 (MREFIHDYAK…ELHLNIVEIR (69 aa)). Positions 212 to 222 (PQAHDRRHSEA) are enriched in basic and acidic residues. The interval 212 to 238 (PQAHDRRHSEAQEGAAPRPPRRDRERA) is disordered.

This sequence belongs to the universal ribosomal protein uS3 family. As to quaternary structure, part of the 30S ribosomal subunit. Forms a tight complex with proteins S10 and S14.

Its function is as follows. Binds the lower part of the 30S subunit head. Binds mRNA in the 70S ribosome, positioning it for translation. The protein is Small ribosomal subunit protein uS3 of Cereibacter sphaeroides (strain ATCC 17025 / ATH 2.4.3) (Rhodobacter sphaeroides).